The sequence spans 843 residues: General transcription and DNA repair factor IIH helicase/translocase subunit XPB/SSL2 (843 aa).

A disordered region spans residues 1 to 85 (MTDVEGYQPK…TAADSSMNQM (85 aa)). Residues 26–41 (SDEDSPATDAEIDENY) are compositionally biased toward acidic residues. Residues 42-56 (DDNRETSEGRGERDT) are compositionally biased toward basic and acidic residues. Residues 64 to 74 (KKPRKKTKSSR) show a composition bias toward basic residues. The Nuclear localization signal motif lies at 64–75 (KKPRKKTKSSRH). Residues 373-535 (MFGNGRARSG…DLNFLIGPKL (163 aa)) form the Helicase ATP-binding domain. 386–393 (LPCGAGKT) is an ATP binding site. A DEAH box motif is present at residues 488 to 491 (DEVH). The Helicase C-terminal domain maps to 589 to 743 (QACQFLIQYH…KVITHLHGME (155 aa)). At Ser752 the chain carries Phosphoserine.

Belongs to the helicase family. RAD25/XPB subfamily. As to quaternary structure, component of the 7-subunit TFIIH core complex composed of XPB/SSL2, XPD/RAD3, SSL1, TFB1, TFB2, TFB4 and TFB5, which is active in NER. The core complex associates with the 3-subunit CTD-kinase module TFIIK composed of CCL1, KIN28 and TFB3 to form the 10-subunit holoenzyme (holo-TFIIH) active in transcription. An additionnal subunit, TFB6, plays a role in the dissociation of the SSL2 helicase from TFIIH after transcription initiation. Interacts directly with TFB6. Mg(2+) serves as cofactor.

The protein resides in the nucleus. It carries out the reaction Couples ATP hydrolysis with the unwinding of duplex DNA by translocating in the 3'-5' direction.. The enzyme catalyses ATP + H2O = ADP + phosphate + H(+). In terms of biological role, ATP-dependent DNA translocase. Component of the general transcription and DNA repair factor IIH (TFIIH) core complex. When complexed to CDK-activating kinase (CAK), involved in RNA transcription by RNA polymerase II. May have 3'-5' helicase activity alone, the TFIIH core however has no 3'-5' helicase activity. Also involved in transcription-coupled nucleotide excision repair (NER) of damaged DNA. In NER, TFIIH acts by opening DNA around the lesion to allow the excision of the damaged oligonucleotide and its replacement by a new DNA fragment. The ATPase activity of XPB/SSL2, but not its helicase activity, is required for DNA opening. In transcription, TFIIH has an essential role in transcription initiation. When the pre-initiation complex (PIC) has been established, TFIIH is required for promoter opening and promoter escape. The ATP-dependent helicase activity of XPB/SSL2 is required for promoter opening and promoter escape. XPB/SSL2 acts as a double-stranded DNA translocase, promoting DNA opening by tracking in a 5'-3' dirction along the nontemplate promoter strand, rotating and inserting DNA into the Pol II active site cleft, leading to DNA unwinding. A dsDNA-stimulated ATPase, dATP and ATP are equally good substrates. May also use this translocase mechanism during DNA repair rather than physically wedging open damaged DNA. This is General transcription and DNA repair factor IIH helicase/translocase subunit XPB/SSL2 from Saccharomyces cerevisiae (strain ATCC 204508 / S288c) (Baker's yeast).